The sequence spans 677 residues: DNA ligase (677 aa).

NAD(+)-binding positions include 35 to 39 (DAEFD), 85 to 86 (SL), and E110. Residue K112 is the N6-AMP-lysine intermediate of the active site. R133 and E173 together coordinate NAD(+). The interval 189-210 (QKEGGKPFANPRNAAAGSLRQK) is disordered. The NAD(+) site is built by K289 and K313. Zn(2+)-binding residues include C407, C410, C426, and C432. In terms of domain architecture, BRCT spans 596–677 (IPDQVLEGLT…FKQLLANGTV (82 aa)).

This sequence belongs to the NAD-dependent DNA ligase family. LigA subfamily. The cofactor is Mg(2+). Mn(2+) is required as a cofactor.

The enzyme catalyses NAD(+) + (deoxyribonucleotide)n-3'-hydroxyl + 5'-phospho-(deoxyribonucleotide)m = (deoxyribonucleotide)n+m + AMP + beta-nicotinamide D-nucleotide.. Its function is as follows. DNA ligase that catalyzes the formation of phosphodiester linkages between 5'-phosphoryl and 3'-hydroxyl groups in double-stranded DNA using NAD as a coenzyme and as the energy source for the reaction. It is essential for DNA replication and repair of damaged DNA. The sequence is that of DNA ligase from Corynebacterium diphtheriae (strain ATCC 700971 / NCTC 13129 / Biotype gravis).